The chain runs to 390 residues: Bibenzyl synthase (390 aa).

The active site involves Cys164.

It belongs to the thiolase-like superfamily. Chalcone/stilbene synthases family.

The catalysed reaction is 3-(3-hydroxyphenyl)-propanoyl-CoA + 3 malonyl-CoA + 3 H(+) = 3,3',5-trihydroxybibenzyl + 4 CO2 + 4 CoA. This chain is Bibenzyl synthase (BIBSY212), found in Phalaenopsis sp. (Moth orchid).